Reading from the N-terminus, the 305-residue chain is 2-pyrone-4,6-dicarbaxylate hydrolase (305 aa).

Substrate contacts are provided by residues 32 to 34, Tyr-50, Thr-78, Arg-125, Arg-131, Tyr-158, and His-182; that span reads HCH. Asp-258 (proton acceptor) is an active-site residue. Asn-263 is a substrate binding site.

This sequence belongs to the metallo-dependent hydrolases superfamily. PDC hydrolase family.

The enzyme catalyses 2-oxo-2H-pyran-4,6-dicarboxylate + H2O = (1E)-4-oxobut-1-ene-1,2,4-tricarboxylate + H(+). Its activity is regulated as follows. Strongly inhibited by 1 mM Zn(2+), Cu(2+), Mn(2+) and Co(2+) ions. Also inhibited by 5,5'-dithiobis(2-nitrobenzoic acid) (Ellman reagent) in vitro. Functionally, involved in the degradation of aromatic compounds via the protocatechuate 4,5-cleavage pathway. Catalyzes the hydrolysis of 2-pyrone-4,6-dicarboxylate (PDC) to oxalomesaconate (OMA). Also catalyzes the reverse reaction. The polypeptide is 2-pyrone-4,6-dicarbaxylate hydrolase (Comamonas testosteroni (Pseudomonas testosteroni)).